The primary structure comprises 354 residues: Thymidylate synthase (354 aa).

Residues 1 to 32 (MPAAGSEPSRPPSPPGVQEQSAEPRPPPPPHG) form a disordered region. A dUMP-binding site is contributed by arginine 53. Serine 117 carries the post-translational modification Phosphoserine. 178–179 (RR) provides a ligand contact to dUMP. Cysteine 198 serves as the catalytic Nucleophile. DUMP contacts are provided by residues 218 to 221 (RSGD), asparagine 229, and 259 to 261 (HIY). Aspartate 221 contributes to the (6R)-5,10-methylene-5,6,7,8-tetrahydrofolate binding site. Lysine 349 participates in a covalent cross-link: Glycyl lysine isopeptide (Lys-Gly) (interchain with G-Cter in SUMO2). Alanine 353 contributes to the (6R)-5,10-methylene-5,6,7,8-tetrahydrofolate binding site.

The protein belongs to the thymidylate synthase family. As to quaternary structure, homodimer.

It is found in the nucleus. The protein resides in the cytoplasm. Its subcellular location is the mitochondrion. It localises to the mitochondrion matrix. The protein localises to the mitochondrion inner membrane. It carries out the reaction dUMP + (6R)-5,10-methylene-5,6,7,8-tetrahydrofolate = 7,8-dihydrofolate + dTMP. The protein operates within pyrimidine metabolism; dTTP biosynthesis. In terms of biological role, catalyzes the reductive methylation of 2'-deoxyuridine 5'-monophosphate (dUMP) to thymidine 5'-monophosphate (dTMP), using the cosubstrate, 5,10- methylenetetrahydrofolate (CH2H4folate) as a 1-carbon donor and reductant and contributes to the de novo mitochondrial thymidylate biosynthesis pathway. The chain is Thymidylate synthase (TYMS) from Bos taurus (Bovine).